A 585-amino-acid polypeptide reads, in one-letter code: Regulatory protein BlaR1 (585 aa).

Residues 1-4 (MAKL) lie on the Extracellular side of the membrane. A helical membrane pass occupies residues 5 to 22 (LIMSIVSFCFIFLLLLFF). The Cytoplasmic portion of the chain corresponds to 23 to 31 (RYILKRYFN). Residues 32 to 48 (YMLNYKVWYLTLLAGLI) traverse the membrane as a helical segment. Topologically, residues 49 to 104 (PFIPIKFSLFKFNNVNNQAPTVESKSHDLNHNINTTKPIQEFATDIHKFNWDSIDN) are extracellular. A helical membrane pass occupies residues 105–122 (ISTVIWIVLVIILSFKFL). The Cytoplasmic portion of the chain corresponds to 123-311 (KALLYLKYLK…NLKKQSKLIL (189 aa)). The helical transmembrane segment at 312-328 (IFICIFTFLLMVIQSQF) threads the bilayer. At 329-585 (LMGQSITDYN…LKEMGVLNGQ (257 aa)) the chain is on the extracellular side. Residues 331–585 (GQSITDYNYK…LKEMGVLNGQ (255 aa)) are beta-lactam antibiotic sensor domain. The Acyl-ester intermediate role is filled by S389. At K392 the chain carries N6-carboxylysine.

Belongs to the peptidase M56 family. Post-translationally, carboxylation occurs on two lysine residues. Carboxylation at 'Lys-392' activates the active site serine residue for acylation. On acylation, the lysine side chain experiences a spontaneous decarboxylation that entraps the sensor in its activated state.

The protein localises to the cell membrane. In terms of biological role, integral membrane protein involved in sensing of the presence of beta-lactam antibiotics and transduction of the information to the cytoplasm. Mechanistically, activation of the signal transducer involves acylation of a serine in the C-terminal sensor domain upon binding of the beta-lactam antibiotic. In turn, a conformational change occurs and the signal is transmitted from the cell surface to the cytoplasm. There, the zinc protease domain is activated and initiates autoproteolysis as well as cleavage of the transcriptional repressor BlaI leading to derepression of antibiotic resistance genes. The chain is Regulatory protein BlaR1 (blaR1) from Staphylococcus aureus.